Reading from the N-terminus, the 2570-residue chain is Stabilin-1 (2570 aa).

An N-terminal signal peptide occupies residues 1-25 (MAGPRGLLPLCLLAFCLAGFSFVRG). The Extracellular portion of the chain corresponds to 26 to 2478 (QVLFKGCDVK…LAPEAPPVAA (2453 aa)). 4 EGF-like domains span residues 110–148 (HECPGGAETPCNGHGTCLDGMDRNGTCVCQENFRGSACQ), 156–193 (FGPDCQSVCSCVHGVCNHGPRGDGSCLCFAGYTGPHCD), 195–229 (ELPVCQELRCPQNTQCSAEAPSCRCLPGYTQQGSE), and 232–271 (APNPCWPSPCSLLAQCSVSPKGQAQCHCPENYHGDGMVCL). 11 cysteine pairs are disulfide-bonded: C112-C126, C120-C136, C138-C147, C160-C171, C164-C181, C183-C192, C199-C210, C204-C217, C236-C247, C241-C257, and C259-C270. N133 carries N-linked (GlcNAc...) asparagine glycosylation. Residues N286, N312, N413, N606, N673, N712, and N745 are each glycosylated (N-linked (GlcNAc...) asparagine). FAS1 domains follow at residues 356-494 (YGHL…TGLR) and 506-641 (KRTI…DGIL). The EGF-like 5 domain occupies 728–768 (DCTQCPGGFSNPCYGKGNCSDGIQGNGACLCFPDYKGIACH). 3 disulfides stabilise this stretch: C732-C746, C740-C756, and C758-C767. An N-linked (GlcNAc...) asparagine glycan is attached at N816. 4 consecutive EGF-like domains span residues 818-858 (SMGD…DGFS), 861-903 (PSNP…RVCV), 904-946 (AIDE…YQCS), and 947-986 (PIDPCRAGNGGCHGLATCRAVGGGQRVCTCPPGFGGDGFS). Cystine bridges form between C822-C837, C831-C846, C865-C879, C873-C889, C891-C902, C908-C922, C916-C932, C934-C945, C951-C964, and C958-C974. 2 FAS1 domains span residues 988–1118 (YGDI…SQVL) and 1128–1253 (GQGL…SGVL). N-linked (GlcNAc...) asparagine glycans are attached at residues N1087, N1096, N1170, N1178, N1222, and N1274. A Laminin EGF-like 1 domain is found at 1327 to 1392 (TLCEPCPGGL…CDCAHGLCQE (66 aa)). Cystine bridges form between C1332–C1346, C1340–C1356, and C1358–C1367. N1378 is a glycosylation site (N-linked (GlcNAc...) asparagine). Disulfide bonds link C1379/C1390, C1383/C1400, C1402/C1411, C1420/C1430, C1424/C1440, C1442/C1453, C1459/C1472, C1466/C1482, C1484/C1495, C1501/C1514, C1508/C1524, C1526/C1538, C1544/C1557, C1551/C1567, and C1569/C1581. EGF-like domains follow at residues 1416–1454 (TSPQCPRKCDPNANCVQDSAGASTCACAAGYSGNGIFCS), 1455–1496 (EVDP…ELCQ), 1497–1539 (EINS…RTCE), and 1540–1582 (LLDP…LTCR). N1471 carries N-linked (GlcNAc...) asparagine glycosylation. 2 consecutive FAS1 domains span residues 1582 to 1708 (RARV…DRVL) and 1724 to 1864 (PRRN…DQLL). Residues N1626 and N1727 are each glycosylated (N-linked (GlcNAc...) asparagine). Positions 1966–2031 (SECQACPGGP…RCTVHGRCDE (66 aa)) constitute a Laminin EGF-like 2 domain. 15 disulfide bridges follow: C1971–C1985, C1979–C1995, C1997–C2006, C2018–C2029, C2023–C2039, C2041–C2050, C2060–C2070, C2064–C2076, C2078–C2089, C2095–C2108, C2102–C2117, C2119–C2130, C2136–C2150, C2144–C2160, and C2162–C2173. EGF-like domains follow at residues 2056–2090 (LQPVCTPPCAPEAVCRAGNSCECSLGYEGDGRVCT), 2091–2131 (VADL…WSCR), and 2132–2174 (ARNP…LQCL). An N-linked (GlcNAc...) asparagine glycan is attached at N2107. Positions 2206 to 2301 (RAGVFHLQAT…SERWDAYCFR (96 aa)) constitute a Link domain. N2222, N2261, N2290, N2334, N2347, N2379, N2393, N2400, and N2424 each carry an N-linked (GlcNAc...) asparagine glycan. Cystine bridges form between C2230-C2299 and C2254-C2275. The FAS1 7 domain occupies 2322–2459 (NGKLLDVLAA…GIIHALASPL (138 aa)). The chain crosses the membrane as a helical span at residues 2479–2499 (GVGAVLAAGALLGLVAGALYL). Residues 2500-2570 (RARGKPMGFG…PDTQRILTVK (71 aa)) lie on the Cytoplasmic side of the membrane.

Interacts with CHID1. In terms of tissue distribution, high levels found in spleen, lymph node, liver and placenta. Also expressed in endothelial cells.

The protein localises to the membrane. Acts as a scavenger receptor for acetylated low density lipoprotein. Binds to both Gram-positive and Gram-negative bacteria and may play a role in defense against bacterial infection. When inhibited in endothelial tube formation assays, there is a marked decrease in cell-cell interactions, suggesting a role in angiogenesis. Involved in the delivery of newly synthesized CHID1/SI-CLP from the biosynthetic compartment to the endosomal/lysosomal system. The protein is Stabilin-1 (STAB1) of Homo sapiens (Human).